Consider the following 591-residue polypeptide: Ketol-acid reductoisomerase, chloroplastic (591 aa).

The segment at M1–S20 is disordered. The transit peptide at M1 to A52 directs the protein to the chloroplast. Position 53 is an N-acetylthreonine (T53). The KARI N-terminal Rossmann domain occupies V102 to T300. NADP(+) is bound by residues G123–Q130, R156–S161, and S195–Q199. The active site involves H220. KARI C-terminal knotted domains lie at T301 to G449 and D450 to L586. Mg(2+) is bound by residues D309, E313, E486, and E490. Residue S512 participates in substrate binding.

It belongs to the ketol-acid reductoisomerase family. Homodimer. Mg(2+) is required as a cofactor.

The protein resides in the plastid. It localises to the chloroplast. It carries out the reaction (2R)-2,3-dihydroxy-3-methylbutanoate + NADP(+) = (2S)-2-acetolactate + NADPH + H(+). The enzyme catalyses (2R,3R)-2,3-dihydroxy-3-methylpentanoate + NADP(+) = (S)-2-ethyl-2-hydroxy-3-oxobutanoate + NADPH + H(+). Its pathway is amino-acid biosynthesis; L-isoleucine biosynthesis; L-isoleucine from 2-oxobutanoate: step 2/4. It functions in the pathway amino-acid biosynthesis; L-valine biosynthesis; L-valine from pyruvate: step 2/4. The protein is Ketol-acid reductoisomerase, chloroplastic of Arabidopsis thaliana (Mouse-ear cress).